The sequence spans 548 residues: 2-succinyl-5-enolpyruvyl-6-hydroxy-3-cyclohexene-1-carboxylate synthase (548 aa).

It belongs to the TPP enzyme family. MenD subfamily. As to quaternary structure, homodimer. Requires Mg(2+) as cofactor. Mn(2+) is required as a cofactor. Thiamine diphosphate serves as cofactor.

It carries out the reaction isochorismate + 2-oxoglutarate + H(+) = 5-enolpyruvoyl-6-hydroxy-2-succinyl-cyclohex-3-ene-1-carboxylate + CO2. It participates in quinol/quinone metabolism; 1,4-dihydroxy-2-naphthoate biosynthesis; 1,4-dihydroxy-2-naphthoate from chorismate: step 2/7. The protein operates within quinol/quinone metabolism; menaquinone biosynthesis. Functionally, catalyzes the thiamine diphosphate-dependent decarboxylation of 2-oxoglutarate and the subsequent addition of the resulting succinic semialdehyde-thiamine pyrophosphate anion to isochorismate to yield 2-succinyl-5-enolpyruvyl-6-hydroxy-3-cyclohexene-1-carboxylate (SEPHCHC). The sequence is that of 2-succinyl-5-enolpyruvyl-6-hydroxy-3-cyclohexene-1-carboxylate synthase from Mycobacterium ulcerans (strain Agy99).